The sequence spans 412 residues: Divalent metal cation transporter MntH (412 aa).

Over 1–19 (MTNYRVESSSGRAARKTRL) the chain is Cytoplasmic. Residues 20–39 (ALMGPAFIAAIGYIDPGNFA) form a helical membrane-spanning segment. At 40–51 (TNIQAGASFGYQ) the chain is on the periplasmic side. A helical membrane pass occupies residues 52-71 (LLWVVVWANLMAMLIQILSA). Residues 72–95 (KLGIATGKNLAEQIRDHYPRPVVW) are Cytoplasmic-facing. The helical transmembrane segment at 96–118 (FYWVQAEIIAMATDLAEFIGAAI) threads the bilayer. The Periplasmic segment spans residues 119–125 (GFKLILG). The chain crosses the membrane as a helical span at residues 126–145 (VSLLQGAVLTGIATFLILML). Residues 146–155 (QRRGQKPLEK) lie on the Cytoplasmic side of the membrane. Residues 156-175 (VIGGLLLFVAAAYIVELIFS) form a helical membrane-spanning segment. The Periplasmic portion of the chain corresponds to 176 to 196 (QPNLAQLGKGMVIPSLPTSEA). The chain crosses the membrane as a helical span at residues 197–220 (VFLAAGVLGATIMPHVIYLHSSLT). The Cytoplasmic portion of the chain corresponds to 221-238 (QHLHGGSRQQRYSATKWD). Residues 239–258 (VAIAMTIAGFVNLAMMATAA) form a helical membrane-spanning segment. At 259–276 (AAFHFSGHTGVADLDEAY) the chain is on the periplasmic side. Residues 277 to 297 (LTLQPLLSHAAATVFGLSLVA) traverse the membrane as a helical segment. Residues 298 to 327 (AGLSSTVVGTLAGQVVMQGFIRFHIPLWVR) lie on the Cytoplasmic side of the membrane. Residues 328–344 (RTVTMLPSFIVILMGLD) form a helical membrane-spanning segment. Residues 345–350 (PTRILV) lie on the Periplasmic side of the membrane. Residues 351-370 (MSQVLLSFGIALALVPLLIF) traverse the membrane as a helical segment. The Cytoplasmic segment spans residues 371 to 387 (TSDSKLMGDLVNSKRVK). A helical membrane pass occupies residues 388 to 406 (QTGWVIVVLVVALNIWLLV). Residues 407–412 (GTALGL) lie on the Periplasmic side of the membrane.

This sequence belongs to the NRAMP family.

The protein localises to the cell inner membrane. In terms of biological role, h(+)-stimulated, divalent metal cation uptake system. The sequence is that of Divalent metal cation transporter MntH from Escherichia coli O9:H4 (strain HS).